We begin with the raw amino-acid sequence, 243 residues long: Protein HUA2 (243 aa).

It is found in the cytoplasm. May have a role in actin patch assembly. The protein is Protein HUA2 (HUA2) of Saccharomyces cerevisiae (strain ATCC 204508 / S288c) (Baker's yeast).